The following is a 538-amino-acid chain: Phosphoenolpyruvate carboxykinase (ATP) (538 aa).

Residues arginine 64, tyrosine 205, and lysine 211 each coordinate substrate. ATP is bound by residues lysine 211, histidine 230, and 246–254 (GLSGTGKTT). Mn(2+) contacts are provided by lysine 211 and histidine 230. Aspartate 267 contributes to the Mn(2+) binding site. ATP is bound by residues glutamate 295, arginine 331, 447–448 (RI), and threonine 453. Position 331 (arginine 331) interacts with substrate.

The protein belongs to the phosphoenolpyruvate carboxykinase (ATP) family. Monomer. Requires Mn(2+) as cofactor.

Its subcellular location is the cytoplasm. It catalyses the reaction oxaloacetate + ATP = phosphoenolpyruvate + ADP + CO2. The protein operates within carbohydrate biosynthesis; gluconeogenesis. Involved in the gluconeogenesis. Catalyzes the conversion of oxaloacetate (OAA) to phosphoenolpyruvate (PEP) through direct phosphoryl transfer between the nucleoside triphosphate and OAA. The protein is Phosphoenolpyruvate carboxykinase (ATP) of Baumannia cicadellinicola subsp. Homalodisca coagulata.